Here is a 387-residue protein sequence, read N- to C-terminus: Protein mab-21-like 3 (387 aa).

It belongs to the mab-21 family.

In Danio rerio (Zebrafish), this protein is Protein mab-21-like 3 (mab21L3).